The chain runs to 503 residues: Maturase K (503 aa).

It belongs to the intron maturase 2 family. MatK subfamily.

The protein localises to the plastid. It localises to the chloroplast. Usually encoded in the trnK tRNA gene intron. Probably assists in splicing its own and other chloroplast group II introns. The protein is Maturase K of Eucalyptus globulus subsp. globulus (Tasmanian blue gum).